A 283-amino-acid chain; its full sequence is Tyrosine recombinase THA_404 (283 aa).

The region spanning 1 to 86 (MDKVIEMFSD…SLNSFFNYLE (86 aa)) is the Core-binding (CB) domain. The region spanning 107 to 281 (KIPDFLTEDE…ADQEKFDAVK (175 aa)) is the Tyr recombinase domain. Residues arginine 145, lysine 170, histidine 233, arginine 236, and histidine 259 contribute to the active site. The active-site O-(3'-phospho-DNA)-tyrosine intermediate is the tyrosine 268.

This sequence belongs to the 'phage' integrase family.

It localises to the cytoplasm. Its function is as follows. Site-specific tyrosine recombinase, which acts by catalyzing the cutting and rejoining of the recombining DNA molecules. The chain is Tyrosine recombinase THA_404 from Thermosipho africanus (strain TCF52B).